Here is a 321-residue protein sequence, read N- to C-terminus: MATH domain and coiled-coil domain-containing protein At3g58410 (321 aa).

The 123-residue stretch at glycine 6–valine 128 folds into the MATH domain. A coiled-coil region spans residues lysine 255–alanine 310.

The chain is MATH domain and coiled-coil domain-containing protein At3g58410 from Arabidopsis thaliana (Mouse-ear cress).